A 338-amino-acid chain; its full sequence is Probable 1-aminocyclopropane-1-carboxylate deaminase (338 aa).

Lysine 51 is modified (N6-(pyridoxal phosphate)lysine). Serine 78 (nucleophile) is an active-site residue.

It belongs to the ACC deaminase/D-cysteine desulfhydrase family. Pyridoxal 5'-phosphate is required as a cofactor.

It carries out the reaction 1-aminocyclopropane-1-carboxylate + H2O = 2-oxobutanoate + NH4(+). Functionally, catalyzes a cyclopropane ring-opening reaction, the irreversible conversion of 1-aminocyclopropane-1-carboxylate (ACC) to ammonia and alpha-ketobutyrate. The sequence is that of Probable 1-aminocyclopropane-1-carboxylate deaminase from Schizosaccharomyces pombe (strain 972 / ATCC 24843) (Fission yeast).